The primary structure comprises 484 residues: uncharacterized protein (484 aa).

Transmembrane regions (helical) follow at residues 19–39 (LSFG…MIFV), 78–98 (VNWG…WLIV), 111–131 (FFML…FIIL), 134–154 (IFAI…SNYL), 165–185 (FSPF…AGII), 199–219 (IVFL…IILG), 249–269 (TWYW…PFTF), 289–309 (ISVF…TIGL), 321–341 (ISTI…VFVL), 360–380 (LFLF…GVML), 398–418 (FGLI…ITSL), and 440–460 (LGAY…LALL).

Its subcellular location is the cell membrane. This is an uncharacterized protein from Mesomycoplasma hyopneumoniae (strain 232) (Mycoplasma hyopneumoniae).